The following is a 333-amino-acid chain: MSTPDAQAAALHAPVLAQRCVDLLAPALESDGAVLVDATLGMGGHSELVLEQCPHARVLGIDRDPRALELATARLARFGQRFTPVHAVYDEIDDVARQHAGGAVQGVLFDLGVSSLQLDDAGRGFAYAQDAPLDMRMDPTTGPTAADLLADADEAELRRILRTYGEEKFAPRIAAAIVRRREAAPLRRSSDLVEVVRGAIPMSAQRTGGHPAKRTFQALRIAVNRELEVLERALPRAIDALAVGGRIVVESYHSLEDRLVKRELARGATSSAPRHLPVVPEEDQPYLELLTHGAEQADDVELAANPRAASVRLRAARRIRTTPTRPSPRRRRP.

S-adenosyl-L-methionine contacts are provided by residues 43-45, D62, Y89, D110, and Q117; that span reads GGH. The disordered stretch occupies residues 312–333; the sequence is RLRAARRIRTTPTRPSPRRRRP.

It belongs to the methyltransferase superfamily. RsmH family.

It localises to the cytoplasm. It catalyses the reaction cytidine(1402) in 16S rRNA + S-adenosyl-L-methionine = N(4)-methylcytidine(1402) in 16S rRNA + S-adenosyl-L-homocysteine + H(+). Its function is as follows. Specifically methylates the N4 position of cytidine in position 1402 (C1402) of 16S rRNA. In Beutenbergia cavernae (strain ATCC BAA-8 / DSM 12333 / CCUG 43141 / JCM 11478 / NBRC 16432 / NCIMB 13614 / HKI 0122), this protein is Ribosomal RNA small subunit methyltransferase H.